A 289-amino-acid polypeptide reads, in one-letter code: 3-methyl-2-oxobutanoate hydroxymethyltransferase (289 aa).

Over residues 1-15 (MSTTFQLDTSTSRAN) the composition is skewed to polar residues. The segment at 1–20 (MSTTFQLDTSTSRANPTPAP) is disordered. Asp67 and Asp106 together coordinate Mg(2+). Residues 67–68 (DS), Asp106, and Lys136 contribute to the 3-methyl-2-oxobutanoate site. Glu138 is a binding site for Mg(2+). The active-site Proton acceptor is the Glu205.

The protein belongs to the PanB family. In terms of assembly, homodecamer; pentamer of dimers. Requires Mg(2+) as cofactor.

It is found in the cytoplasm. The enzyme catalyses 3-methyl-2-oxobutanoate + (6R)-5,10-methylene-5,6,7,8-tetrahydrofolate + H2O = 2-dehydropantoate + (6S)-5,6,7,8-tetrahydrofolate. It participates in cofactor biosynthesis; (R)-pantothenate biosynthesis; (R)-pantoate from 3-methyl-2-oxobutanoate: step 1/2. Its function is as follows. Catalyzes the reversible reaction in which hydroxymethyl group from 5,10-methylenetetrahydrofolate is transferred onto alpha-ketoisovalerate to form ketopantoate. In Novosphingobium aromaticivorans (strain ATCC 700278 / DSM 12444 / CCUG 56034 / CIP 105152 / NBRC 16084 / F199), this protein is 3-methyl-2-oxobutanoate hydroxymethyltransferase.